A 1442-amino-acid polypeptide reads, in one-letter code: Death-associated protein kinase 1 (1442 aa).

In terms of domain architecture, Protein kinase spans 13 to 275 (YDTGEELGSG…IQDSLQHPWI (263 aa)). ATP-binding positions include 19-27 (LGSGQFAVV) and Lys42. The Proton acceptor role is filled by Asp139. A calmodulin-binding region spans residues 267-334 (QDSLQHPWIK…RSNMSVARSD (68 aa)). A Phosphoserine; by RPS6KA1 and RPS6KA3 modification is found at Ser289. The segment at 292 to 301 (NMEKFKKFAA) is autoinhibitory domain. Residue Ser308 is modified to Phosphoserine; by autocatalysis. Ser319 and Ser333 each carry phosphoserine. ANK repeat units lie at residues 378-407 (HGTP…RIDV), 411-440 (GGSN…PLDV), 444-473 (SGET…NPDF), 477-506 (EEET…NVNI), 510-539 (EGET…DLNA), 543-572 (DGHI…FVDF), 576-605 (HGNT…NLDI), and 609-638 (YGRT…NVEA). The Roc domain maps to 681–955 (TQNLQPRIKL…NHLQEIRSQI (275 aa)). At Ser734 the chain carries Phosphoserine; by MAPK1. The stretch at 875–904 (KLKNPLRVVLVATHADIMNIPRPAGGEFGY) is one ANK 9 repeat. Ser1115 is modified (phosphoserine). The stretch at 1164–1196 (DADIRLWVSGCRIANRGAELLVLLVNHGQGIEV) is one ANK 10 repeat. The 85-residue stretch at 1312–1396 (KLSRLLDPPD…DAADFLLKAS (85 aa)) folds into the Death domain. Phosphoserine is present on Ser1433.

Belongs to the protein kinase superfamily. CAMK Ser/Thr protein kinase family. DAP kinase subfamily. As to quaternary structure, interacts with KLHL20. Interacts (via death domain) with MAPK1 and MAPK3. Interacts with MAP1B (via N-terminus). Interacts with PRKD1 in an oxidative stress-regulated manner. Interacts with PIN1, PDCD6, BECN1, TSC2 and STX1A. Interacts (via kinase domain) with DAPK3 (via kinase domain). Interacts with GRINB. Interacts (via death domain) with UNC5B (via death domain). Interacts with UNC5C (via death domain). Requires Mg(2+) as cofactor. Post-translationally, ubiquitinated by the BCR(KLHL20) E3 ubiquitin ligase complex, leading to its degradation by the proteasome. In terms of processing, in response to mitogenic stimulation (PMA or EGF), phosphorylated at Ser-289; phosphorylation suppresses DAPK1 pro-apoptotic function. Autophosphorylation at Ser-308 inhibits its catalytic activity. Phosphorylation at Ser-734 by MAPK1 increases its catalytic activity and promotes cytoplasmic retention of MAPK1. Endoplasmic-stress can cause dephosphorylation at Ser-308. In terms of tissue distribution, high levels in bladder, uterus, vas deferens, lung, liver and kidney.

The catalysed reaction is L-seryl-[protein] + ATP = O-phospho-L-seryl-[protein] + ADP + H(+). It carries out the reaction L-threonyl-[protein] + ATP = O-phospho-L-threonyl-[protein] + ADP + H(+). Its activity is regulated as follows. Activated by Ca(2+)/calmodulin. Regulated by a locking mechanism, involving autophosphorylation at Ser-308 and calmodulin binding. In the inactive state, Ser-308 is phosphorylated. Activation involves its dephosphorylation and a release-of-autoinhibition mechanism where binding of calmodulin induces a conformational change that relieves the steric block of the active site by the autoinhibitory domain. Activity is modulated by UNC5B and NTN1. UNC5B activates it by inhibiting the phosphorylation at Ser-308, whereas NTN1 inhibits UNC5B-mediated activation of DAPK1. Endoplasmic-stress activates by causing Ser-308 dephosphorylation. Its function is as follows. Calcium/calmodulin-dependent serine/threonine kinase involved in multiple cellular signaling pathways that trigger cell survival, apoptosis, and autophagy. Regulates both type I apoptotic and type II autophagic cell deaths signal, depending on the cellular setting. The former is caspase-dependent, while the latter is caspase-independent and is characterized by the accumulation of autophagic vesicles. Phosphorylates PIN1 resulting in inhibition of its catalytic activity, nuclear localization, and cellular function. Phosphorylates TPM1, enhancing stress fiber formation in endothelial cells. Phosphorylates STX1A and significantly decreases its binding to STXBP1. Phosphorylates PRKD1 and regulates JNK signaling by binding and activating PRKD1 under oxidative stress. Phosphorylates BECN1, reducing its interaction with BCL2 and BCL2L1 and promoting the induction of autophagy. Phosphorylates TSC2, disrupting the TSC1-TSC2 complex and stimulating mTORC1 activity in a growth factor-dependent pathway. Phosphorylates RPS6, MYL9 and DAPK3. Acts as a signaling amplifier of NMDA receptors at extrasynaptic sites for mediating brain damage in stroke. Cerebral ischemia recruits DAPK1 into the NMDA receptor complex and it phosphorylates GRINB at Ser-1303 inducing injurious Ca(2+) influx through NMDA receptor channels, resulting in an irreversible neuronal death. Required together with DAPK3 for phosphorylation of RPL13A upon interferon-gamma activation which is causing RPL13A involvement in transcript-selective translation inhibition. This is Death-associated protein kinase 1 (Dapk1) from Mus musculus (Mouse).